The following is a 212-amino-acid chain: Imidazole glycerol phosphate synthase subunit HisH (212 aa).

The Glutamine amidotransferase type-1 domain maps to 2–212 (QTAIIDYGMG…LTMLKNFLNW (211 aa)). C85 serves as the catalytic Nucleophile. Residues H194 and E196 contribute to the active site.

As to quaternary structure, heterodimer of HisH and HisF.

It localises to the cytoplasm. It carries out the reaction 5-[(5-phospho-1-deoxy-D-ribulos-1-ylimino)methylamino]-1-(5-phospho-beta-D-ribosyl)imidazole-4-carboxamide + L-glutamine = D-erythro-1-(imidazol-4-yl)glycerol 3-phosphate + 5-amino-1-(5-phospho-beta-D-ribosyl)imidazole-4-carboxamide + L-glutamate + H(+). It catalyses the reaction L-glutamine + H2O = L-glutamate + NH4(+). Its pathway is amino-acid biosynthesis; L-histidine biosynthesis; L-histidine from 5-phospho-alpha-D-ribose 1-diphosphate: step 5/9. Functionally, IGPS catalyzes the conversion of PRFAR and glutamine to IGP, AICAR and glutamate. The HisH subunit catalyzes the hydrolysis of glutamine to glutamate and ammonia as part of the synthesis of IGP and AICAR. The resulting ammonia molecule is channeled to the active site of HisF. This Neisseria gonorrhoeae (strain ATCC 700825 / FA 1090) protein is Imidazole glycerol phosphate synthase subunit HisH.